The following is a 184-amino-acid chain: Outer-membrane lipoprotein carrier protein (184 aa).

Residues 1–19 (MKAFLKILMVLIFVSVAYA) form the signal peptide.

Belongs to the LolA family. As to quaternary structure, monomer.

The protein localises to the periplasm. Its function is as follows. Participates in the translocation of lipoproteins from the inner membrane to the outer membrane. Only forms a complex with a lipoprotein if the residue after the N-terminal Cys is not an aspartate (The Asp acts as a targeting signal to indicate that the lipoprotein should stay in the inner membrane). The chain is Outer-membrane lipoprotein carrier protein from Helicobacter pylori (strain P12).